The sequence spans 80 residues: Large ribosomal subunit protein uL24 (80 aa).

This sequence belongs to the universal ribosomal protein uL24 family. Part of the 50S ribosomal subunit.

Its function is as follows. One of two assembly initiator proteins, it binds directly to the 5'-end of the 23S rRNA, where it nucleates assembly of the 50S subunit. In terms of biological role, one of the proteins that surrounds the polypeptide exit tunnel on the outside of the subunit. In Chlorobium phaeobacteroides (strain DSM 266 / SMG 266 / 2430), this protein is Large ribosomal subunit protein uL24.